The chain runs to 86 residues: Serine protease inhibitor Kazal-type 9 (86 aa).

An N-terminal signal peptide occupies residues 1–19; it reads MRATAIVLLLALTLATMFS. The Kazal-like domain occupies 26-86; it reads TKQMVDCSHY…TLKFVHFGKC (61 aa). Cystine bridges form between C32–C68, C46–C65, and C54–C86.

Dimer. Interacts with KLK5 and KLK8. As to expression, skin. Highly expressed at sites of hyperkeratosis. Also detected in thymus, tonsils, testis, pancreas, liver, placenta and brain. Expressed at stratum granulosum and stratum corneum at palmar and plantar sites (at protein level).

It is found in the secreted. Functionally, serine protease inhibitor which specifically inhibits KLK5. May contribute to the regulation of the desquamation process in skin by inhibiting KLK5. The sequence is that of Serine protease inhibitor Kazal-type 9 (SPINK9) from Homo sapiens (Human).